The chain runs to 261 residues: MNKDEEFLEEHHYKDDDAIEGEEEQGEEEESDLDDDMYNIDGETNDDDDDDEAEDEESSEDEKQNQKFLYKKKRNLTKSSSNGEFKIIPYSTLKGNTPTKGILKNKSQPPPKKNRIVWDEENLTINDMNKSSTMKIDEPKTPYHYYESEEETDESKKYLENKFLELQNALDKQQEKSEWDSDNDEQQQEKEKEKDKKKKKKNLKIHMRSDSDDNDDNEDEDEDETEEKKENKKKFDNLRKAHYNEFKVVRDLNANLSDDEQ.

The span at 1-16 shows a compositional bias: basic and acidic residues; sequence MNKDEEFLEEHHYKDD. The required for binding to pppB stretch occupies residues 1 to 150; that stretch reads MNKDEEFLEE…TPYHYYESEE (150 aa). The disordered stretch occupies residues 1-261; sequence MNKDEEFLEE…LNANLSDDEQ (261 aa). The segment covering 17-60 has biased composition (acidic residues); that stretch reads DAIEGEEEQGEEEESDLDDDMYNIDGETNDDDDDDEAEDEESSE. The span at 123–134 shows a compositional bias: polar residues; the sequence is LTINDMNKSSTM. The stretch at 150 to 242 forms a coiled coil; the sequence is EETDESKKYL…KKFDNLRKAH (93 aa). Positions 154-163 are enriched in basic and acidic residues; sequence ESKKYLENKF. Over residues 195–206 the composition is skewed to basic residues; that stretch reads DKKKKKKNLKIH. The segment covering 212-225 has biased composition (acidic residues); the sequence is DDNDDNEDEDEDET. Positions 226-250 are enriched in basic and acidic residues; sequence EEKKENKKKFDNLRKAHYNEFKVVR.

Belongs to the protein phosphatase inhibitor 2 family. As to quaternary structure, interacts with pppB.

Inhibitor of protein-phosphatase 1 (PP1). The polypeptide is Protein phosphatase inhibitor 2 (dpiA) (Dictyostelium discoideum (Social amoeba)).